The following is a 2073-amino-acid chain: Putative mediator of RNA polymerase II transcription subunit 26 (2073 aa).

Disordered regions lie at residues isoleucine 22 to glutamine 94, proline 115 to phenylalanine 146, glutamine 241 to glutamine 260, and glutamine 287 to glutamine 334. The span at asparagine 31 to phenylalanine 41 shows a compositional bias: polar residues. Over residues asparagine 42–asparagine 78 the composition is skewed to low complexity. Coiled coils occupy residues isoleucine 166–glutamine 453 and leucine 674–isoleucine 710. 2 stretches are compositionally biased toward low complexity: residues glutamine 287–glutamine 314 and glutamine 322–glutamine 334. Disordered stretches follow at residues lysine 796–isoleucine 879, isoleucine 908–isoleucine 1175, asparagine 1215–asparagine 1260, asparagine 1403–lysine 1475, lysine 1489–proline 1539, alanine 1551–serine 1571, lysine 1587–lysine 1645, isoleucine 1804–serine 1836, asparagine 1868–asparagine 1935, and phenylalanine 2019–serine 2073. Low complexity-rich tracts occupy residues asparagine 798–asparagine 870 and serine 923–asparagine 937. A compositionally biased stretch (basic residues) spans lysine 938–serine 947. A compositionally biased stretch (acidic residues) spans leucine 953–aspartate 963. Composition is skewed to low complexity over residues serine 964–serine 977, alanine 1027–threonine 1038, proline 1047–threonine 1065, serine 1073–serine 1115, and lysine 1127–threonine 1156. Polar residues predominate over residues leucine 1157 to serine 1166. Low complexity-rich tracts occupy residues asparagine 1215–valine 1258 and asparagine 1403–asparagine 1424. Positions serine 1425–lysine 1440 are enriched in basic and acidic residues. 4 stretches are compositionally biased toward low complexity: residues serine 1444–serine 1465, leucine 1490–proline 1520, serine 1527–proline 1539, and alanine 1551–glutamine 1560. Residues glutamate 1561–serine 1571 show a composition bias toward polar residues. Low complexity-rich tracts occupy residues serine 1599 to serine 1609 and isoleucine 1804 to glutamate 1817. The stretch at asparagine 1884–methionine 1930 forms a coiled coil.

The protein belongs to the Mediator complex subunit 26 family. In terms of assembly, component of the Mediator complex.

It localises to the nucleus. In terms of biological role, component of the Mediator complex, a coactivator involved in the regulated transcription of nearly all RNA polymerase II-dependent genes. Mediator functions as a bridge to convey information from gene-specific regulatory proteins to the basal RNA polymerase II transcription machinery. Mediator is recruited to promoters by direct interactions with regulatory proteins and serves as a scaffold for the assembly of a functional preinitiation complex with RNA polymerase II and the general transcription factors. This Dictyostelium discoideum (Social amoeba) protein is Putative mediator of RNA polymerase II transcription subunit 26 (med26).